We begin with the raw amino-acid sequence, 140 residues long: Lymphocyte antigen 6L (140 aa).

Positions 1–20 (MAPLLLVLWASLVSMELTGG) are cleaved as a signal peptide. The UPAR/Ly6 domain occupies 31-124 (LSCFECFKVL…GSWEGFWSLP (94 aa)). 2 disulfides stabilise this stretch: cysteine 33-cysteine 50 and cysteine 105-cysteine 110. Serine 116 carries GPI-anchor amidated serine lipidation. Residues 117-140 (WEGFWSLPGRLLLPMGLGLFCTLL) constitute a propeptide, removed in mature form.

It localises to the cell membrane. This Mus musculus (Mouse) protein is Lymphocyte antigen 6L.